A 374-amino-acid polypeptide reads, in one-letter code: N-acetyldiaminopimelate deacetylase (374 aa).

Residue Asp69 is part of the active site. Catalysis depends on Glu128, which acts as the Proton acceptor.

The protein belongs to the peptidase M20A family. N-acetyldiaminopimelate deacetylase subfamily.

It carries out the reaction N-acetyl-(2S,6S)-2,6-diaminopimelate + H2O = (2S,6S)-2,6-diaminopimelate + acetate. Its pathway is amino-acid biosynthesis; L-lysine biosynthesis via DAP pathway; LL-2,6-diaminopimelate from (S)-tetrahydrodipicolinate (acetylase route): step 3/3. Its function is as follows. Catalyzes the conversion of N-acetyl-diaminopimelate to diaminopimelate and acetate. The protein is N-acetyldiaminopimelate deacetylase of Bacillus licheniformis (strain ATCC 14580 / DSM 13 / JCM 2505 / CCUG 7422 / NBRC 12200 / NCIMB 9375 / NCTC 10341 / NRRL NRS-1264 / Gibson 46).